The sequence spans 771 residues: DNA helicase/primase complex-associated protein (771 aa).

It belongs to the herpesviridae HEPA family. As to quaternary structure, associates with the primase and the helicase to form the helicase-primase complex. Interacts with the origin-binding protein. Interacts with the polymerase catalytic subunit.

The protein localises to the host nucleus. In terms of biological role, component of the helicase/primase complex. Unwinds the DNA at the replication forks and generates single-stranded DNA for both leading and lagging strand synthesis. The primase synthesizes short RNA primers on the lagging strand that the polymerase presumably elongates using dNTPs. The primase-associated factor has no known catalytic activity in the complex and may serve to facilitate the formation of the replisome by directly interacting with the origin-binding protein and the polymerase. The protein is DNA helicase/primase complex-associated protein of Homo sapiens (Human).